A 709-amino-acid chain; its full sequence is Protein transport protein SEC39 (709 aa).

Belongs to the SEC39 family. In terms of assembly, component of a peripheral membrane protein complex consisting of DSL1, SEC39/DSL3 and TIP20. Bound to a SNARE complex consisting of UFE1, USE1, SEC20 and SEC22 or YKT6 through direct interaction of TIP20 with SEC20. Interacts with TIP20 and DSL1.

It localises to the endoplasmic reticulum membrane. Its function is as follows. Required for protein transport between the Golgi and the endoplasmic reticulum. May contribute to tethering of coatomer-coated retrograde transport vesicles to the ER membrane through interaction with and stabilization of the SNARE complex. In Saccharomyces cerevisiae (strain ATCC 204508 / S288c) (Baker's yeast), this protein is Protein transport protein SEC39.